We begin with the raw amino-acid sequence, 930 residues long: Translation initiation factor IF-2 (930 aa).

Residues 50–67 (FKPAAAPKVEAKPAAPKV) show a composition bias toward low complexity. Disordered regions lie at residues 50-195 (FKPA…PRID) and 260-346 (EVVP…HELP). 2 stretches are compositionally biased toward basic and acidic residues: residues 68–90 (SAEK…EAKP) and 110–125 (FKAE…AERR). Residues 129-141 (KGNNRDQQQNGNR) show a composition bias toward low complexity. Composition is skewed to basic and acidic residues over residues 157–167 (RDNRRFNDQAK) and 262–295 (VPEK…DGPR). A compositionally biased stretch (low complexity) spans 309-318 (NQKNSNWNNN). Over residues 337 to 346 (VTERKFHELP) the composition is skewed to basic and acidic residues. In terms of domain architecture, tr-type G spans 432–599 (ERPPVVTIMG…TVLLVAEIQE (168 aa)). Residues 441-448 (GHVDHGKT) form a G1 region. 441 to 448 (GHVDHGKT) contacts GTP. Residues 466 to 470 (GITQH) are G2. The tract at residues 487 to 490 (DTPG) is G3. Residues 487-491 (DTPGH) and 541-544 (NKID) contribute to the GTP site. The G4 stretch occupies residues 541–544 (NKID). A G5 region spans residues 577–579 (SAK).

The protein belongs to the TRAFAC class translation factor GTPase superfamily. Classic translation factor GTPase family. IF-2 subfamily.

The protein localises to the cytoplasm. Its function is as follows. One of the essential components for the initiation of protein synthesis. Protects formylmethionyl-tRNA from spontaneous hydrolysis and promotes its binding to the 30S ribosomal subunits. Also involved in the hydrolysis of GTP during the formation of the 70S ribosomal complex. The chain is Translation initiation factor IF-2 from Streptococcus pneumoniae (strain ATCC BAA-255 / R6).